We begin with the raw amino-acid sequence, 212 residues long: Mediator of RNA polymerase II transcription subunit 20 (212 aa).

The protein belongs to the Mediator complex subunit 20 family. Interacts with PPARG. Component of the Mediator complex, which is composed of MED1, MED4, MED6, MED7, MED8, MED9, MED10, MED11, MED12, MED13, MED13L, MED14, MED15, MED16, MED17, MED18, MED19, MED20, MED21, MED22, MED23, MED24, MED25, MED26, MED27, MED29, MED30, MED31, CCNC, CDK8 and CDC2L6/CDK11. The MED12, MED13, CCNC and CDK8 subunits form a distinct module termed the CDK8 module. Mediator containing the CDK8 module is less active than Mediator lacking this module in supporting transcriptional activation. Individual preparations of the Mediator complex lacking one or more distinct subunits have been variously termed ARC, CRSP, DRIP, PC2, SMCC and TRAP.

It localises to the nucleus. Component of the Mediator complex, a coactivator involved in the regulated transcription of nearly all RNA polymerase II-dependent genes. Mediator functions as a bridge to convey information from gene-specific regulatory proteins to the basal RNA polymerase II transcription machinery. Mediator is recruited to promoters by direct interactions with regulatory proteins and serves as a scaffold for the assembly of a functional preinitiation complex with RNA polymerase II and the general transcription factors. In Homo sapiens (Human), this protein is Mediator of RNA polymerase II transcription subunit 20 (MED20).